Here is a 694-residue protein sequence, read N- to C-terminus: Ribonuclease R (694 aa).

The RNB domain maps to 204-525 (RKDLRDLLCF…IVHRLLFHPL (322 aa)). The 78-residue stretch at 571-648 (ATLYKAFIIT…LTQSIEWTLV (78 aa)) folds into the S1 motif domain. Residues 652-694 (TKAKAKRTSKKKKTESVTTKEKKKSPAKKKKGATKTKKGSGKN) form a disordered region. Basic residues-rich tracts occupy residues 654–664 (AKAKRTSKKKK) and 672–694 (EKKK…SGKN).

This sequence belongs to the RNR ribonuclease family. RNase R subfamily.

It localises to the cytoplasm. It carries out the reaction Exonucleolytic cleavage in the 3'- to 5'-direction to yield nucleoside 5'-phosphates.. 3'-5' exoribonuclease that releases 5'-nucleoside monophosphates and is involved in maturation of structured RNAs. The sequence is that of Ribonuclease R from Chlamydia trachomatis serovar D (strain ATCC VR-885 / DSM 19411 / UW-3/Cx).